The chain runs to 736 residues: Elongation factor 2 (736 aa).

The region spanning 18-261 is the tr-type G domain; that stretch reads EQVRNIGITA…MVVKFIPNPR (244 aa). GTP contacts are provided by residues 27–34, 93–97, and 147–150; these read AHVDHGKT, DTPGH, and NKVD. H602 bears the Diphthamide mark.

This sequence belongs to the TRAFAC class translation factor GTPase superfamily. Classic translation factor GTPase family. EF-G/EF-2 subfamily.

The protein resides in the cytoplasm. Functionally, catalyzes the GTP-dependent ribosomal translocation step during translation elongation. During this step, the ribosome changes from the pre-translocational (PRE) to the post-translocational (POST) state as the newly formed A-site-bound peptidyl-tRNA and P-site-bound deacylated tRNA move to the P and E sites, respectively. Catalyzes the coordinated movement of the two tRNA molecules, the mRNA and conformational changes in the ribosome. The polypeptide is Elongation factor 2 (Staphylothermus marinus (strain ATCC 43588 / DSM 3639 / JCM 9404 / F1)).